Consider the following 252-residue polypeptide: Beta-carotene isomerase D27, chloroplastic (252 aa).

A chloroplast-targeting transit peptide spans 1 to 43 (MDSKMIAHNMSLTPTLAQWKKLRLKPKHTFVVGVLARPTDDIS).

Fe cation is required as a cofactor. In terms of tissue distribution, highly expressed in roots. Expressed at low levels in leaves and stems.

It localises to the plastid. The protein resides in the chloroplast. The enzyme catalyses all-trans-beta-carotene = 9-cis-beta-carotene. Functionally, involved in strigolactones biosynthesis by catalyzing the isomerization of the C9-C10 double bond in all-trans-beta-carotene leading to 9-cis-beta-carotene and providing the substrate for CCD7. Strigolactones are hormones that inhibit tillering and shoot branching through the MAX-dependent pathway, contribute to the regulation of shoot architectural response to phosphate-limiting conditions and function as rhizosphere signals that stimulate hyphal branching of arbuscular mycorrhizal fungi and trigger seed germination of root parasitic weeds. The protein is Beta-carotene isomerase D27, chloroplastic of Medicago truncatula (Barrel medic).